The primary structure comprises 182 residues: Isopentenyl-diphosphate Delta-isomerase (182 aa).

Mn(2+) is bound by residues histidine 25 and histidine 32. In terms of domain architecture, Nudix hydrolase spans 30 to 164 (LLHLAFSSWL…PWAFSPWMVM (135 aa)). The active site involves cysteine 67. Residue histidine 69 participates in Mn(2+) binding. Glutamate 87 lines the Mg(2+) pocket. Residues glutamate 114 and glutamate 116 each coordinate Mn(2+). Glutamate 116 is an active-site residue.

This sequence belongs to the IPP isomerase type 1 family. In terms of assembly, homodimer. Mg(2+) is required as a cofactor. It depends on Mn(2+) as a cofactor.

It localises to the cytoplasm. The catalysed reaction is isopentenyl diphosphate = dimethylallyl diphosphate. Its pathway is isoprenoid biosynthesis; dimethylallyl diphosphate biosynthesis; dimethylallyl diphosphate from isopentenyl diphosphate: step 1/1. Catalyzes the 1,3-allylic rearrangement of the homoallylic substrate isopentenyl (IPP) to its highly electrophilic allylic isomer, dimethylallyl diphosphate (DMAPP). This chain is Isopentenyl-diphosphate Delta-isomerase, found in Shigella flexneri serotype 5b (strain 8401).